The primary structure comprises 316 residues: Ornithine carbamoyltransferase (316 aa).

Residues 57 to 60, Q84, R108, and 135 to 138 contribute to the carbamoyl phosphate site; these read STRT and HPCQ. L-ornithine-binding positions include N166, D230, and 234-235; that span reads SM. Carbamoyl phosphate is bound by residues 269–270 and R297; that span reads CL.

This sequence belongs to the aspartate/ornithine carbamoyltransferase superfamily. OTCase family.

The protein resides in the cytoplasm. It catalyses the reaction carbamoyl phosphate + L-ornithine = L-citrulline + phosphate + H(+). It participates in amino-acid degradation; L-arginine degradation via ADI pathway; carbamoyl phosphate from L-arginine: step 2/2. Reversibly catalyzes the transfer of the carbamoyl group from carbamoyl phosphate (CP) to the N(epsilon) atom of ornithine (ORN) to produce L-citrulline. The sequence is that of Ornithine carbamoyltransferase from Bacillus anthracis (strain CDC 684 / NRRL 3495).